The chain runs to 89 residues: MANTPGAKKAVRKIARRTEVNTARRSRVRTFLRKFEEALASGDAGAAKAAFVQAQSELMRAVSKGVVHKNTGARKVSRLAARLKKLSAA.

This sequence belongs to the bacterial ribosomal protein bS20 family.

Binds directly to 16S ribosomal RNA. The sequence is that of Small ribosomal subunit protein bS20 from Phenylobacterium zucineum (strain HLK1).